The primary structure comprises 115 residues: Large ribosomal subunit protein bL19 (115 aa).

It belongs to the bacterial ribosomal protein bL19 family.

Its function is as follows. This protein is located at the 30S-50S ribosomal subunit interface and may play a role in the structure and function of the aminoacyl-tRNA binding site. This Lactobacillus delbrueckii subsp. bulgaricus (strain ATCC BAA-365 / Lb-18) protein is Large ribosomal subunit protein bL19.